The chain runs to 196 residues: Molybdenum cofactor guanylyltransferase (196 aa).

GTP contacts are provided by residues 10 to 12, Lys23, Asn51, Asp69, and Asp99; that span reads LAG. Asp99 is a binding site for Mg(2+).

The protein belongs to the MobA family. In terms of assembly, monomer. The cofactor is Mg(2+).

It localises to the cytoplasm. The enzyme catalyses Mo-molybdopterin + GTP + H(+) = Mo-molybdopterin guanine dinucleotide + diphosphate. Its function is as follows. Transfers a GMP moiety from GTP to Mo-molybdopterin (Mo-MPT) cofactor (Moco or molybdenum cofactor) to form Mo-molybdopterin guanine dinucleotide (Mo-MGD) cofactor. The sequence is that of Molybdenum cofactor guanylyltransferase from Shewanella loihica (strain ATCC BAA-1088 / PV-4).